A 335-amino-acid polypeptide reads, in one-letter code: Dihydroorotate dehydrogenase (quinone) (335 aa).

FMN-binding positions include 58 to 62 (AGADK) and T82. Residue K62 coordinates substrate. 107–111 (NRNGF) lines the substrate pocket. Residues N135 and N168 each contribute to the FMN site. N168 contacts substrate. The Nucleophile role is filled by S171. Position 173 (N173) interacts with substrate. Residues K213 and G241 each coordinate FMN. 242-243 (NT) contacts substrate. FMN contacts are provided by residues G264, G293, and 314–315 (YS).

This sequence belongs to the dihydroorotate dehydrogenase family. Type 2 subfamily. As to quaternary structure, monomer. FMN is required as a cofactor.

It localises to the cell membrane. The catalysed reaction is (S)-dihydroorotate + a quinone = orotate + a quinol. Its pathway is pyrimidine metabolism; UMP biosynthesis via de novo pathway; orotate from (S)-dihydroorotate (quinone route): step 1/1. Catalyzes the conversion of dihydroorotate to orotate with quinone as electron acceptor. The protein is Dihydroorotate dehydrogenase (quinone) of Actinobacillus pleuropneumoniae serotype 5b (strain L20).